Reading from the N-terminus, the 457-residue chain is Transmembrane protease serine 5 (457 aa).

The tract at residues 1–21 (MSLMLDDQPPMEAQYAEEGPG) is disordered. The Cytoplasmic segment spans residues 1-49 (MSLMLDDQPPMEAQYAEEGPGPGIFRAEPGDQQHPISQAVCWRSMRRGC). The helical; Signal-anchor for type II membrane protein transmembrane segment at 50–70 (AVLGALGLLAGAGVGSWLLVL) threads the bilayer. At 71–457 (YLCPAASQPI…IHDTAQDSLL (387 aa)) the chain is on the extracellular side. The SRCR domain maps to 112–207 (FRINSEDFLL…SGQVVSLRCS (96 aa)). Intrachain disulfides connect cysteine 135–cysteine 196, cysteine 148–cysteine 206, cysteine 209–cysteine 328, cysteine 243–cysteine 259, cysteine 342–cysteine 411, cysteine 374–cysteine 390, and cysteine 401–cysteine 429. N-linked (GlcNAc...) asparagine glycans are attached at residues asparagine 163, asparagine 170, and asparagine 195. Positions 218–453 (IVGGQSVAPG…FLDWIHDTAQ (236 aa)) constitute a Peptidase S1 domain. Active-site charge relay system residues include histidine 258 and aspartate 308. 2 N-linked (GlcNAc...) asparagine glycosylation sites follow: asparagine 319 and asparagine 375. Serine 405 functions as the Charge relay system in the catalytic mechanism.

It belongs to the peptidase S1 family. As to expression, brain-specific. Predominantly expressed in neurons, in their axons, and at the synapses of motoneurons in the spinal cord.

It is found in the cell membrane. Functionally, may play a role in hearing. In Homo sapiens (Human), this protein is Transmembrane protease serine 5 (TMPRSS5).